The sequence spans 183 residues: Ribosome-recycling factor (183 aa).

This sequence belongs to the RRF family.

Its subcellular location is the cytoplasm. In terms of biological role, responsible for the release of ribosomes from messenger RNA at the termination of protein biosynthesis. May increase the efficiency of translation by recycling ribosomes from one round of translation to another. This chain is Ribosome-recycling factor, found in Afipia carboxidovorans (strain ATCC 49405 / DSM 1227 / KCTC 32145 / OM5) (Oligotropha carboxidovorans).